A 596-amino-acid polypeptide reads, in one-letter code: Sphingomyelinase C 1 (596 aa).

An N-terminal signal peptide occupies residues 1 to 36 (MITKRNIPCKKNWKYKKKSISLTLITICYMFLFLTS). The tract at residues 63-118 (KIEDSTNTDPSSNVNEEDENSINANANDNAPSDSDSSNPRSPDKNPVNPTSPNSSS) is disordered. The span at 67 to 76 (STNTDPSSNV) shows a compositional bias: polar residues. A compositionally biased stretch (low complexity) spans 83 to 118 (SINANANDNAPSDSDSSNPRSPDKNPVNPTSPNSSS).

It is found in the secreted. The enzyme catalyses a sphingomyelin + H2O = phosphocholine + an N-acylsphing-4-enine + H(+). This chain is Sphingomyelinase C 1 (sph1), found in Leptospira interrogans serogroup Icterohaemorrhagiae serovar copenhageni (strain Fiocruz L1-130).